Consider the following 519-residue polypeptide: Cytochrome P450 monooxygenase apdE (519 aa).

Residues 27–47 (FVFFAFVVYSCFTIAVGWVVY) form a helical membrane-spanning segment. N327 and N379 each carry an N-linked (GlcNAc...) asparagine glycan. C466 provides a ligand contact to heme. Residue N508 is glycosylated (N-linked (GlcNAc...) asparagine).

This sequence belongs to the cytochrome P450 family. Heme is required as a cofactor.

It localises to the membrane. The protein operates within secondary metabolite biosynthesis. Functionally, cytochrome P450 monooxygenase; part of the gene cluster that mediates the biosynthesis of aspyridones. The polyketide-amino acid backbone preaspyridone A is first assembled by the PKS-NRPS hybrid apdA. The assembly of preaspyridone A is initiated by loading of malonyl-CoA onto apdA, followed by decarboxylation to yield the acetyl starter unit. The growing polyketide chain then elongates into a tetraketide. The adpA PKS module catalyzes three Claisen condensations, as well as beta-keto processing and methylation. Alpha-methylation step during polyketide synthesis is a prerequisite and a key checkpoint for chain transfer between PKS and NRPS modules. The downstream NRPS module contains the condensation (C), adenylation (A), and thiolation (T) domains and catalyzes the incorporation of tyrosine via the formation of the L-tyrosinyl-thioester and the amide linkage between L-tyrosinyl-thioester and the tetraketide. The bimodular assembly line is terminated with a reductase (R) domain that facilitates formation and release of the tetramic acid product. Because apdA lacks a designated enoylreductase (ER) domain, the required activity is provided the enoyl reductase apdC. ApdC appears to operate with different stereoselectivity in different PKS cycle. Combined with apdC, apdA is proposed to synthesize preaspyridone A via about 20 enzymatic steps. A number of oxidative steps performed successively by the cytochrome P450 monooxygenases apdE and apdB are required for the conversion of preaspyridone A to aspyridone A. The cytochrome P450 monooxygenase apdE is responsible for the oxidative dephenylation of preaspyridone A. Finally, the predicted FAD-dependent monooxygenase apdD and the acyl-CoA dehydrogenase apdG may be involved in the transformation of aspyridone A into aspyridone B. This is Cytochrome P450 monooxygenase apdE from Emericella nidulans (strain FGSC A4 / ATCC 38163 / CBS 112.46 / NRRL 194 / M139) (Aspergillus nidulans).